The sequence spans 274 residues: Formamidopyrimidine-DNA glycosylase (274 aa).

P2 (schiff-base intermediate with DNA) is an active-site residue. Residue E3 is the Proton donor of the active site. K58 (proton donor; for beta-elimination activity) is an active-site residue. The DNA site is built by H91, R110, and K152. Residues 237-271 (KVYGRKNLPCLVCENKIETVVIAGRHSAFCPHCQP) form an FPG-type zinc finger. The active-site Proton donor; for delta-elimination activity is R261.

This sequence belongs to the FPG family. Monomer. The cofactor is Zn(2+).

It carries out the reaction Hydrolysis of DNA containing ring-opened 7-methylguanine residues, releasing 2,6-diamino-4-hydroxy-5-(N-methyl)formamidopyrimidine.. The enzyme catalyses 2'-deoxyribonucleotide-(2'-deoxyribose 5'-phosphate)-2'-deoxyribonucleotide-DNA = a 3'-end 2'-deoxyribonucleotide-(2,3-dehydro-2,3-deoxyribose 5'-phosphate)-DNA + a 5'-end 5'-phospho-2'-deoxyribonucleoside-DNA + H(+). In terms of biological role, involved in base excision repair of DNA damaged by oxidation or by mutagenic agents. Acts as a DNA glycosylase that recognizes and removes damaged bases. Has a preference for oxidized purines, such as 7,8-dihydro-8-oxoguanine (8-oxoG). Has AP (apurinic/apyrimidinic) lyase activity and introduces nicks in the DNA strand. Cleaves the DNA backbone by beta-delta elimination to generate a single-strand break at the site of the removed base with both 3'- and 5'-phosphates. This is Formamidopyrimidine-DNA glycosylase from Legionella pneumophila (strain Lens).